We begin with the raw amino-acid sequence, 107 residues long: MNTEFINNIGLTHYLVLAALLFVMGMAGVLLRRNVIVLLMSIELMLNSVNLTFVAFSKYLGLLDGHIMVFFVMTIAAAEAAVGLALAVSIFKRFNEVNIRFFEHLKG.

The next 3 membrane-spanning stretches (helical) occupy residues Leu-11–Leu-31, Ile-36–Phe-56, and Ile-67–Ala-87.

The protein belongs to the complex I subunit 4L family. In terms of assembly, NDH-1 is composed of 14 different subunits. Subunits NuoA, H, J, K, L, M, N constitute the membrane sector of the complex.

The protein resides in the cell inner membrane. It carries out the reaction a quinone + NADH + 5 H(+)(in) = a quinol + NAD(+) + 4 H(+)(out). Its function is as follows. NDH-1 shuttles electrons from NADH, via FMN and iron-sulfur (Fe-S) centers, to quinones in the respiratory chain. The immediate electron acceptor for the enzyme in this species is believed to be ubiquinone. Couples the redox reaction to proton translocation (for every two electrons transferred, four hydrogen ions are translocated across the cytoplasmic membrane), and thus conserves the redox energy in a proton gradient. The sequence is that of NADH-quinone oxidoreductase subunit K from Bdellovibrio bacteriovorus (strain ATCC 15356 / DSM 50701 / NCIMB 9529 / HD100).